The chain runs to 393 residues: NAD(P)H-quinone oxidoreductase subunit H, chloroplastic (393 aa).

The protein belongs to the complex I 49 kDa subunit family. As to quaternary structure, NDH is composed of at least 16 different subunits, 5 of which are encoded in the nucleus.

Its subcellular location is the plastid. It localises to the chloroplast thylakoid membrane. It catalyses the reaction a plastoquinone + NADH + (n+1) H(+)(in) = a plastoquinol + NAD(+) + n H(+)(out). The catalysed reaction is a plastoquinone + NADPH + (n+1) H(+)(in) = a plastoquinol + NADP(+) + n H(+)(out). Its function is as follows. NDH shuttles electrons from NAD(P)H:plastoquinone, via FMN and iron-sulfur (Fe-S) centers, to quinones in the photosynthetic chain and possibly in a chloroplast respiratory chain. The immediate electron acceptor for the enzyme in this species is believed to be plastoquinone. Couples the redox reaction to proton translocation, and thus conserves the redox energy in a proton gradient. In Sorghum bicolor (Sorghum), this protein is NAD(P)H-quinone oxidoreductase subunit H, chloroplastic.